We begin with the raw amino-acid sequence, 245 residues long: MKVVVIIPARYGSTRFEAKPLALIAGKPMIQRVYERAAAASSVTGVAVATDDERIVSAVEKFGGKAVMTSDACRSGTDRVFEAGRTLGLTGSDIVVNVQGDQPVFDPECIDEVTAPLIGDPGTGMTTLAFAIVNEREMTDPKDVKMVFDQDGWALYFSRATIPHDRDGNMEFDTYKHLGVYAYTMDFLAEFCSLPEGHLEKIEKLEQLRALEYGLGIKTVVTAYDSPEVDLPEDIARIEALLKDQ.

Belongs to the KdsB family.

The protein localises to the cytoplasm. It carries out the reaction 3-deoxy-alpha-D-manno-oct-2-ulosonate + CTP = CMP-3-deoxy-beta-D-manno-octulosonate + diphosphate. The protein operates within nucleotide-sugar biosynthesis; CMP-3-deoxy-D-manno-octulosonate biosynthesis; CMP-3-deoxy-D-manno-octulosonate from 3-deoxy-D-manno-octulosonate and CTP: step 1/1. It functions in the pathway bacterial outer membrane biogenesis; lipopolysaccharide biosynthesis. In terms of biological role, activates KDO (a required 8-carbon sugar) for incorporation into bacterial lipopolysaccharide in Gram-negative bacteria. This Desulfatibacillum aliphaticivorans protein is 3-deoxy-manno-octulosonate cytidylyltransferase.